The primary structure comprises 478 residues: 9-divinyl ether synthase (478 aa).

C431 provides a ligand contact to heme.

The protein belongs to the cytochrome P450 family. 9-divinyl ether synthase subfamily.

It carries out the reaction (9S)-hydroperoxy-(10E,12Z)-octadecadienoate = colneleate + H2O. Its function is as follows. Involved in the biosynthesis of the anti-fungal toxins colneleic acid and colnelenic acid. This is 9-divinyl ether synthase (DES) from Capsicum annuum (Capsicum pepper).